A 971-amino-acid polypeptide reads, in one-letter code: Translation initiation factor IF-2 (971 aa).

A compositionally biased stretch (basic and acidic residues) spans 49–63 (HLRKSHGATDGDKRK). Disordered stretches follow at residues 49–86 (HLRKSHGATDGDKRKITLTRKHTSEIKQSDATGKARTI) and 101–385 (DVAE…APTE). Residues 105–114 (GAEQGQAQVA) are compositionally biased toward low complexity. Positions 121–177 (ELKRREEEARREAELLEKQAQELRERQERLEREEAERRAREEAAEAQRRRAEEEAAA) are enriched in basic and acidic residues. Positions 178 to 209 (KRAAAAAVEAQQVAAQQAAEAQQETAGAQSAQ) are enriched in low complexity. Over residues 210-261 (DEARAAAERAAQREAAKKAEDAAREAADKTRAEQEEIRKRREAAEAEARAIR) the composition is skewed to basic and acidic residues. Pro residues predominate over residues 277 to 286 (PPKPVEPPKP). Low complexity predominate over residues 298-325 (KPAGASAARPAVKKPAGAAPATTAPAGA). Residues 355–368 (SSGGVDRGWRGGPK) show a composition bias toward gly residues. Positions 471–640 (PRPPVVTVMG…LLQAEVLELK (170 aa)) constitute a tr-type G domain. Residues 480–487 (GHVDHGKT) form a G1 region. 480 to 487 (GHVDHGKT) contributes to the GTP binding site. A G2 region spans residues 505–509 (GITQH). Positions 526–529 (DTPG) are G3. GTP is bound by residues 526-530 (DTPGH) and 580-583 (NKID). A G4 region spans residues 580–583 (NKID). Positions 616-618 (SAK) are G5.

It belongs to the TRAFAC class translation factor GTPase superfamily. Classic translation factor GTPase family. IF-2 subfamily.

The protein resides in the cytoplasm. Functionally, one of the essential components for the initiation of protein synthesis. Protects formylmethionyl-tRNA from spontaneous hydrolysis and promotes its binding to the 30S ribosomal subunits. Also involved in the hydrolysis of GTP during the formation of the 70S ribosomal complex. The chain is Translation initiation factor IF-2 from Burkholderia ambifaria (strain ATCC BAA-244 / DSM 16087 / CCUG 44356 / LMG 19182 / AMMD) (Burkholderia cepacia (strain AMMD)).